Consider the following 158-residue polypeptide: Large ribosomal subunit protein uL15 (158 aa).

Positions 1–13 (MKLNEIKDNEGST) are enriched in basic and acidic residues. The tract at residues 1 to 45 (MKLNEIKDNEGSTHSRKRLGRGIGSGSGKTGGRGVKGQKSRSGVA) is disordered. A compositionally biased stretch (gly residues) spans 21–35 (RGIGSGSGKTGGRGV).

It belongs to the universal ribosomal protein uL15 family. As to quaternary structure, part of the 50S ribosomal subunit.

Functionally, binds to the 23S rRNA. In Rhizobium etli (strain CIAT 652), this protein is Large ribosomal subunit protein uL15.